The sequence spans 685 residues: Coiled-coil domain-containing protein 8 homolog (685 aa).

The segment at 93 to 127 is disordered; sequence VGTYDSSNGSDSELSDFDTSKVKGNRSSSGRTRKV. Phosphoserine occurs at positions 142 and 146. Disordered stretches follow at residues 207–263, 281–538, 558–579, and 599–623; these read QRVK…GTRR, VPPF…KAEA, QRAE…TGAT, and REEA…KQVK. The span at 219–228 shows a compositional bias: polar residues; it reads EVGQTQQAST. Over residues 246–256 the composition is skewed to basic and acidic residues; sequence DSSRNTGDRSD. Low complexity-rich tracts occupy residues 299–329, 337–353, 361–401, and 409–420; these read AENQ…PRAE, EAVA…PRAE, EAAA…PRAE, and EAAASPIAEAAA. The segment covering 425–440 has biased composition (basic and acidic residues); sequence ELVDSPRAETAADPRA. A compositionally biased stretch (low complexity) spans 458-468; that stretch reads AAASPIAEAAA. Residues 473–488 are compositionally biased toward basic and acidic residues; the sequence is ELVDSPRAETAADPRA. A compositionally biased stretch (low complexity) spans 505–519; it reads EVAASPRAEAAASPR. Positions 558-567 are enriched in basic and acidic residues; it reads QRAEAIDSQR. The segment covering 611–622 has biased composition (polar residues); that stretch reads SAGSGSRAQKQV. The PxLPxI/L motif; mediates interaction with ANKRA2 signature appears at 647-653; that stretch reads PRLPTLP.

In terms of assembly, component of the 3M complex, composed of core components CUL7, CCDC8 and OBSL1. Interacts (via PxLPxI/L motif) with ANKRA2 (via ankyrin repeats); may link the 3M complex to histone deacetylases including HDAC4 and HDAC5.

The protein resides in the cytoplasm. The protein localises to the cytoskeleton. It localises to the microtubule organizing center. It is found in the centrosome. Functionally, core component of the 3M complex, a complex required to regulate microtubule dynamics and genome integrity. It is unclear how the 3M complex regulates microtubules, it could act by controlling the level of a microtubule stabilizer. Required for localization of CUL7 to the centrosome. This is Coiled-coil domain-containing protein 8 homolog (Ccdc8) from Mus musculus (Mouse).